The chain runs to 494 residues: UDP-N-acetylmuramoyl-L-alanyl-D-glutamate--L-lysine ligase (494 aa).

Ser-30 contacts UDP-N-acetyl-alpha-D-muramoyl-L-alanyl-D-glutamate. Position 110 to 116 (110 to 116 (GTNGKTS)) interacts with ATP. UDP-N-acetyl-alpha-D-muramoyl-L-alanyl-D-glutamate-binding positions include 152–153 (TT), Ser-179, and Arg-187. Lys-219 is modified (N6-carboxylysine). The L-lysine recognition motif signature appears at 406–409 (DNPA).

The protein belongs to the MurCDEF family. MurE subfamily. In terms of processing, carboxylation is probably crucial for Mg(2+) binding and, consequently, for the gamma-phosphate positioning of ATP.

Its subcellular location is the cytoplasm. The catalysed reaction is UDP-N-acetyl-alpha-D-muramoyl-L-alanyl-D-glutamate + L-lysine + ATP = UDP-N-acetyl-alpha-D-muramoyl-L-alanyl-gamma-D-glutamyl-L-lysine + ADP + phosphate + H(+). The protein operates within cell wall biogenesis; peptidoglycan biosynthesis. In terms of biological role, catalyzes the addition of L-lysine to the nucleotide precursor UDP-N-acetylmuramoyl-L-alanyl-D-glutamate (UMAG) in the biosynthesis of bacterial cell-wall peptidoglycan. The polypeptide is UDP-N-acetylmuramoyl-L-alanyl-D-glutamate--L-lysine ligase (Staphylococcus haemolyticus (strain JCSC1435)).